A 196-amino-acid chain; its full sequence is ATP-dependent Clp protease proteolytic subunit (196 aa).

S98 functions as the Nucleophile in the catalytic mechanism. H123 is an active-site residue.

It belongs to the peptidase S14 family. Fourteen ClpP subunits assemble into 2 heptameric rings which stack back to back to give a disk-like structure with a central cavity, resembling the structure of eukaryotic proteasomes.

The protein localises to the cytoplasm. The enzyme catalyses Hydrolysis of proteins to small peptides in the presence of ATP and magnesium. alpha-casein is the usual test substrate. In the absence of ATP, only oligopeptides shorter than five residues are hydrolyzed (such as succinyl-Leu-Tyr-|-NHMec, and Leu-Tyr-Leu-|-Tyr-Trp, in which cleavage of the -Tyr-|-Leu- and -Tyr-|-Trp bonds also occurs).. Functionally, cleaves peptides in various proteins in a process that requires ATP hydrolysis. Has a chymotrypsin-like activity. Plays a major role in the degradation of misfolded proteins. The polypeptide is ATP-dependent Clp protease proteolytic subunit (Geobacillus sp. (strain WCH70)).